Reading from the N-terminus, the 230-residue chain is Small ribosomal subunit protein uS3c (230 aa).

The KH type-2 domain occupies 39 to 109; that stretch reads IRSFIHSKLS…QLRVNVVEIA (71 aa).

It belongs to the universal ribosomal protein uS3 family. As to quaternary structure, part of the 30S ribosomal subunit.

The protein resides in the plastid. The protein localises to the chloroplast. This Pyropia yezoensis (Susabi-nori) protein is Small ribosomal subunit protein uS3c (rps3).